The primary structure comprises 377 residues: tRNA-specific 2-thiouridylase MnmA (377 aa).

Residues 12 to 19 (GMSGGVDS) and M38 contribute to the ATP site. Residues 98–100 (NPD) form an interaction with target base in tRNA region. Catalysis depends on C103, which acts as the Nucleophile. C103 and C200 form a disulfide bridge. G127 lines the ATP pocket. The interval 150-152 (KDQ) is interaction with tRNA. C200 functions as the Cysteine persulfide intermediate in the catalytic mechanism. An interaction with tRNA region spans residues 314–315 (RY).

This sequence belongs to the MnmA/TRMU family.

It is found in the cytoplasm. The enzyme catalyses S-sulfanyl-L-cysteinyl-[protein] + uridine(34) in tRNA + AH2 + ATP = 2-thiouridine(34) in tRNA + L-cysteinyl-[protein] + A + AMP + diphosphate + H(+). Its function is as follows. Catalyzes the 2-thiolation of uridine at the wobble position (U34) of tRNA, leading to the formation of s(2)U34. The protein is tRNA-specific 2-thiouridylase MnmA of Limosilactobacillus reuteri (strain DSM 20016) (Lactobacillus reuteri).